Consider the following 436-residue polypeptide: 3-ketoacyl-CoA thiolase (436 aa).

The Acyl-thioester intermediate role is filled by Cys-99. Catalysis depends on proton acceptor residues His-392 and Cys-422.

This sequence belongs to the thiolase-like superfamily. Thiolase family. Heterotetramer of two alpha chains (FadJ) and two beta chains (FadI).

It localises to the cytoplasm. It catalyses the reaction an acyl-CoA + acetyl-CoA = a 3-oxoacyl-CoA + CoA. It participates in lipid metabolism; fatty acid beta-oxidation. In terms of biological role, catalyzes the final step of fatty acid oxidation in which acetyl-CoA is released and the CoA ester of a fatty acid two carbons shorter is formed. The sequence is that of 3-ketoacyl-CoA thiolase from Shewanella sp. (strain W3-18-1).